The chain runs to 1164 residues: Phytochrome D (1164 aa).

The interval 1–55 (MVSGGGSKTSGGEAASSGHRRSRHTSAAEQAQSSANKALRSQNQQPQNHGGGTES) is disordered. Polar residues predominate over residues 25–55 (TSAAEQAQSSANKALRSQNQQPQNHGGGTES). Positions 255–437 (DIKLLCDTVV…AFGLQLNMEL (183 aa)) constitute a GAF domain. Phytochromobilin is bound at residue cysteine 360. 2 PAS domains span residues 656-727 (VARE…LKGD) and 790-861 (DYKA…MIVL). Positions 938 to 1157 (YIFQVIKNPL…LIVIELPVPL (220 aa)) constitute a Histidine kinase domain.

This sequence belongs to the phytochrome family. As to quaternary structure, homodimer. Post-translationally, contains one covalently linked phytochromobilin chromophore.

Functionally, regulatory photoreceptor which exists in two forms that are reversibly interconvertible by light: the Pr form that absorbs maximally in the red region of the spectrum and the Pfr form that absorbs maximally in the far-red region. Photoconversion of Pr to Pfr induces an array of morphogenic responses, whereas reconversion of Pfr to Pr cancels the induction of those responses. Pfr controls the expression of a number of nuclear genes including those encoding the small subunit of ribulose-bisphosphate carboxylase, chlorophyll A/B binding protein, protochlorophyllide reductase, rRNA, etc. It also controls the expression of its own gene(s) in a negative feedback fashion. In Arabidopsis thaliana (Mouse-ear cress), this protein is Phytochrome D (PHYD).